Reading from the N-terminus, the 264-residue chain is Thymidylate synthase (264 aa).

A dUMP-binding site is contributed by arginine 21. Histidine 51 provides a ligand contact to (6R)-5,10-methylene-5,6,7,8-tetrahydrofolate. 126–127 serves as a coordination point for dUMP; the sequence is RR. Cysteine 146 serves as the catalytic Nucleophile. DUMP is bound by residues 166 to 169, asparagine 177, and 207 to 209; these read RSCD and HLY. Aspartate 169 contacts (6R)-5,10-methylene-5,6,7,8-tetrahydrofolate. Alanine 263 lines the (6R)-5,10-methylene-5,6,7,8-tetrahydrofolate pocket.

The protein belongs to the thymidylate synthase family. Bacterial-type ThyA subfamily. In terms of assembly, homodimer.

It is found in the cytoplasm. The catalysed reaction is dUMP + (6R)-5,10-methylene-5,6,7,8-tetrahydrofolate = 7,8-dihydrofolate + dTMP. Its pathway is pyrimidine metabolism; dTTP biosynthesis. In terms of biological role, catalyzes the reductive methylation of 2'-deoxyuridine-5'-monophosphate (dUMP) to 2'-deoxythymidine-5'-monophosphate (dTMP) while utilizing 5,10-methylenetetrahydrofolate (mTHF) as the methyl donor and reductant in the reaction, yielding dihydrofolate (DHF) as a by-product. This enzymatic reaction provides an intracellular de novo source of dTMP, an essential precursor for DNA biosynthesis. This is Thymidylate synthase from Cronobacter sakazakii (strain ATCC BAA-894) (Enterobacter sakazakii).